A 294-amino-acid chain; its full sequence is tRNA dimethylallyltransferase (294 aa).

11–18 (GPTAVGKT) is a binding site for ATP. 13-18 (TAVGKT) lines the substrate pocket. An interaction with substrate tRNA region spans residues 36–39 (DSQQ).

This sequence belongs to the IPP transferase family. Monomer. It depends on Mg(2+) as a cofactor.

It catalyses the reaction adenosine(37) in tRNA + dimethylallyl diphosphate = N(6)-dimethylallyladenosine(37) in tRNA + diphosphate. In terms of biological role, catalyzes the transfer of a dimethylallyl group onto the adenine at position 37 in tRNAs that read codons beginning with uridine, leading to the formation of N6-(dimethylallyl)adenosine (i(6)A). The protein is tRNA dimethylallyltransferase of Lactococcus lactis subsp. cremoris (strain MG1363).